A 311-amino-acid chain; its full sequence is Acetyl-coenzyme A carboxylase carboxyl transferase subunit alpha (311 aa).

The region spanning 36 to 286 is the CoA carboxyltransferase C-terminal domain; the sequence is ELKKEVERVY…VNYFLKSLEE (251 aa).

This sequence belongs to the AccA family. As to quaternary structure, acetyl-CoA carboxylase is a heterohexamer composed of biotin carboxyl carrier protein (AccB), biotin carboxylase (AccC) and two subunits each of ACCase subunit alpha (AccA) and ACCase subunit beta (AccD).

It localises to the cytoplasm. It carries out the reaction N(6)-carboxybiotinyl-L-lysyl-[protein] + acetyl-CoA = N(6)-biotinyl-L-lysyl-[protein] + malonyl-CoA. It participates in lipid metabolism; malonyl-CoA biosynthesis; malonyl-CoA from acetyl-CoA: step 1/1. In terms of biological role, component of the acetyl coenzyme A carboxylase (ACC) complex. First, biotin carboxylase catalyzes the carboxylation of biotin on its carrier protein (BCCP) and then the CO(2) group is transferred by the carboxyltransferase to acetyl-CoA to form malonyl-CoA. The chain is Acetyl-coenzyme A carboxylase carboxyl transferase subunit alpha from Wolinella succinogenes (strain ATCC 29543 / DSM 1740 / CCUG 13145 / JCM 31913 / LMG 7466 / NCTC 11488 / FDC 602W) (Vibrio succinogenes).